We begin with the raw amino-acid sequence, 473 residues long: H(+)/Cl(-) exchange transporter ClcA (473 aa).

Residues 1-32 (MKTDTPSLETPQAARLRRRQLIRQLLERDKTP) lie on the Cytoplasmic side of the membrane. A helical transmembrane segment spans residues 33–69 (LAILFMAAVVGTLVGLAAVAFDKGVAWLQNQRMGALV). Residues 70 to 76 (HTADNYP) are Periplasmic-facing. A helical membrane pass occupies residues 77-100 (LLLTVAFLCSAVLAMFGYFLVRKY). The short motif at 106-110 (GSGIP) is the Selectivity filter part_1 element. S107 is a binding site for chloride. The segment at residues 109-116 (IPEIEGAL) is an intramembrane region (helical). Topologically, residues 117-123 (EDQRPVR) are cytoplasmic. 2 consecutive transmembrane segments (helical) span residues 124–141 (WWRV…TLGG) and 148–166 (EGPT…LDIF). Residues 146-150 (GREGP) carry the Selectivity filter part_2 motif. Over 167-176 (RLKGDEARHT) the chain is Cytoplasmic. 2 consecutive intramembrane regions (helical) follow at residues 177-189 (LLAT…LAAA) and 193-201 (PLAGILFII). The Cytoplasmic segment spans residues 202 to 214 (EEMRPQFRYTLIS). A helical membrane pass occupies residues 215 to 232 (IKAVFIGVIMSTIMYRIF). Residues 233 to 252 (NHEVALIDVGKLSDAPLNTL) are Periplasmic-facing. Residues 253 to 281 (WLYLILGIIFGIFGPIFNKWVLGMQDLLH) traverse the membrane as a helical segment. The Cytoplasmic segment spans residues 282–287 (RVHGGN). A helical transmembrane segment spans residues 288 to 309 (ITKWVLMGGAIGGLCGLLGFVA). The Periplasmic portion of the chain corresponds to 310–329 (PATSGGGFNLIPIATAGNFS). A run of 2 helical transmembrane segments spans residues 330–349 (MGML…LCFS) and 355–376 (GIFA…MVAV). The short motif at 355-359 (GIFAP) is the Selectivity filter part_3 element. Positions 356 and 357 each coordinate chloride. The Periplasmic portion of the chain corresponds to 377–386 (ELFPQYHLEA). The segment at residues 387 to 401 (GTFAIAGMGALLAAS) is an intramembrane region (helical). The note=Loop between two helices intramembrane region spans 402–404 (IRA). Positions 405 to 416 (PLTGIILVLEMT) form an intramembrane region, helical. An intramembrane region (note=Loop between two helices) is located at residues 417–421 (DNYQL). The chain crosses the membrane as a helical span at residues 422–438 (ILPMIITGLGATLLAQF). At 439-473 (TGGKPLYSAILARTLAKQEAEQLARSKAASASENT) the chain is on the cytoplasmic side. Y445 lines the chloride pocket.

This sequence belongs to the chloride channel (TC 2.A.49) family. ClcA subfamily. Homodimer.

It is found in the cell inner membrane. The enzyme catalyses 2 chloride(in) + H(+)(out) = 2 chloride(out) + H(+)(in). Its function is as follows. Proton-coupled chloride transporter. Functions as antiport system and exchanges two chloride ions for 1 proton. Probably acts as an electrical shunt for an outwardly-directed proton pump that is linked to amino acid decarboxylation, as part of the extreme acid resistance (XAR) response. This is H(+)/Cl(-) exchange transporter ClcA from Shigella flexneri serotype 5b (strain 8401).